The sequence spans 280 residues: ESX-1 secretion-associated protein EspJ (280 aa).

At Ser70 the chain carries Phosphoserine. Composition is skewed to low complexity over residues 167 to 181 (QTIS…QSAQ) and 246 to 280 (PAQA…TTTL). The interval 167–280 (QTISQTAQQA…TPAPSTTTTL (114 aa)) is disordered.

Residues 76-280 interact with EsxB and an artificial EsxB-EsxA heterodimer. In terms of processing, phosphorylated at Ser-70.

The protein localises to the secreted. Its function is as follows. Could be involved in regulation of growth and intracellular survival. This Mycobacterium tuberculosis (strain ATCC 25618 / H37Rv) protein is ESX-1 secretion-associated protein EspJ.